The chain runs to 1770 residues: Transposon Ty2-F Gag-Pol polyprotein (1770 aa).

Composition is skewed to polar residues over residues 1–11 (MESQQLHQNPH), 19–39 (ASVT…SASN), and 49–60 (KVNSQQETTPGT). 2 disordered regions span residues 1 to 86 (MESQ…GQYQ) and 359 to 453 (QHSE…LPDH). The tract at residues 295–397 (ENNINVSDRL…SSKPRAAKAH (103 aa)) is RNA-binding. Positions 369-381 (TSPNTTNTKVTTR) are enriched in low complexity. Composition is skewed to polar residues over residues 399–408 (IATSSKFSRV) and 415–435 (ESTV…GQQQ). The active-site For protease activity; shared with dimeric partner is the D457. The interval 579–636 (NVNKSKSVNKYPYPLIHRMLGHANFRSIQKSLKKNAVTYLKESDIEWSNASTYQCPDC) is integrase-type zinc finger-like. The region spanning 656-831 (ESYEPFQYLH…AGLDITTILP (176 aa)) is the Integrase catalytic domain. Positions 667 and 732 each coordinate Mg(2+). 4 disordered regions span residues 1004 to 1034 (MGGT…STNE), 1059 to 1135 (TEEP…KSSK), 1146 to 1165 (LPLP…VSKD), and 1170 to 1205 (HSRQ…TEIE). 2 stretches are compositionally biased toward polar residues: residues 1009–1034 (ESDT…STNE) and 1065–1082 (QRNS…STPS). The segment covering 1151 to 1165 (LTHKSPTDTSDVSKD) has biased composition (basic and acidic residues). A Bipartite nuclear localization signal motif is present at residues 1193–1227 (KKRSLEDNETEIEVSRDTWNNKNMRSLEPPRSKKR). In terms of domain architecture, Reverse transcriptase Ty1/copia-type spans 1353–1491 (NDYYITQLDI…DILGLEIKYQ (139 aa)). Residues D1361, D1442, D1443, D1625, E1667, and D1700 each contribute to the Mg(2+) site. Positions 1625 to 1767 (DASYGNQPYY…IKTFKLLTNK (143 aa)) constitute an RNase H Ty1/copia-type domain.

As to quaternary structure, the capsid protein forms a homotrimer, from which the VLPs are assembled. The protease is a homodimer, whose active site consists of two apposed aspartic acid residues. Post-translationally, initially, virus-like particles (VLPs) are composed of the structural unprocessed proteins Gag and Gag-Pol, and also contain the host initiator methionine tRNA (tRNA(i)-Met) which serves as a primer for minus-strand DNA synthesis, and a dimer of genomic Ty RNA. Processing of the polyproteins occurs within the particle and proceeds by an ordered pathway, called maturation. First, the protease (PR) is released by autocatalytic cleavage of the Gag-Pol polyprotein, and this cleavage is a prerequisite for subsequent processing at the remaining sites to release the mature structural and catalytic proteins. Maturation takes place prior to the RT reaction and is required to produce transposition-competent VLPs.

The protein resides in the cytoplasm. Its subcellular location is the nucleus. It carries out the reaction DNA(n) + a 2'-deoxyribonucleoside 5'-triphosphate = DNA(n+1) + diphosphate. The enzyme catalyses Endonucleolytic cleavage to 5'-phosphomonoester.. In terms of biological role, capsid protein (CA) is the structural component of the virus-like particle (VLP), forming the shell that encapsulates the retrotransposons dimeric RNA genome. The particles are assembled from trimer-clustered units and there are holes in the capsid shells that allow for the diffusion of macromolecules. CA also has nucleocapsid-like chaperone activity, promoting primer tRNA(i)-Met annealing to the multipartite primer-binding site (PBS), dimerization of Ty2 RNA and initiation of reverse transcription. Functionally, the aspartyl protease (PR) mediates the proteolytic cleavages of the Gag and Gag-Pol polyproteins after assembly of the VLP. Reverse transcriptase/ribonuclease H (RT) is a multifunctional enzyme that catalyzes the conversion of the retro-elements RNA genome into dsDNA within the VLP. The enzyme displays a DNA polymerase activity that can copy either DNA or RNA templates, and a ribonuclease H (RNase H) activity that cleaves the RNA strand of RNA-DNA heteroduplexes during plus-strand synthesis and hydrolyzes RNA primers. The conversion leads to a linear dsDNA copy of the retrotransposon that includes long terminal repeats (LTRs) at both ends. Its function is as follows. Integrase (IN) targets the VLP to the nucleus, where a subparticle preintegration complex (PIC) containing at least integrase and the newly synthesized dsDNA copy of the retrotransposon must transit the nuclear membrane. Once in the nucleus, integrase performs the integration of the dsDNA into the host genome. The chain is Transposon Ty2-F Gag-Pol polyprotein (TY2B-F) from Saccharomyces cerevisiae (strain ATCC 204508 / S288c) (Baker's yeast).